Here is a 119-residue protein sequence, read N- to C-terminus: Large ribosomal subunit protein bL20 (119 aa).

It belongs to the bacterial ribosomal protein bL20 family.

Its function is as follows. Binds directly to 23S ribosomal RNA and is necessary for the in vitro assembly process of the 50S ribosomal subunit. It is not involved in the protein synthesizing functions of that subunit. In Dehalococcoides mccartyi (strain ATCC BAA-2100 / JCM 16839 / KCTC 5957 / BAV1), this protein is Large ribosomal subunit protein bL20.